Consider the following 70-residue polypeptide: U-actitoxin-Avd11a (70 aa).

Residues 36–70 (CNDYKSSSYCRSVGSRNECGIHKYRMYCRKTCGSC) form the ShKT domain. 3 cysteine pairs are disulfide-bonded: Cys-36–Cys-70, Cys-45–Cys-63, and Cys-54–Cys-67. Residues 58 to 59 (KY) form a crucial for binding to potassium channels region.

It belongs to the sea anemone type 1 potassium channel toxin family. Type 1b subfamily.

Its subcellular location is the secreted. The protein resides in the nematocyst. Functionally, inhibits voltage-gated potassium channels (Kv1/KCNA). This chain is U-actitoxin-Avd11a, found in Anemonia viridis (Snakelocks anemone).